We begin with the raw amino-acid sequence, 475 residues long: ATP-dependent rRNA helicase RRP3 (475 aa).

Positions 30–59 (ALKQKKQAPVTEKPEEIVETTSEASQDVNS) are disordered. Polar residues predominate over residues 48–59 (ETTSEASQDVNS). A Q motif motif is present at residues 64–92 (HTFSELNLVPELMEAIEKLKYTKPTPIQS). The Helicase ATP-binding domain occupies 95–266 (IPHALEGKDI…RASLHEPVKV (172 aa)). 108–115 (AQTGSGKT) serves as a coordination point for ATP. The DEAD box motif lies at 214–217 (DEAD). The Helicase C-terminal domain maps to 293–437 (FLIHLLNEFM…KDPSPPRDVL (145 aa)). The tract at residues 451 to 475 (AIKQTKDFHEKRTKKKRDDRDREER) is disordered.

It belongs to the DEAD box helicase family. DDX47/RRP3 subfamily.

The protein resides in the nucleus. Functionally, required for pre-ribosomal RNA processing. Involved in the maturation of the 35S-pre-rRNA and to its cleavage to mature 18S rRNA. This is ATP-dependent rRNA helicase RRP3 (RRP3) from Meyerozyma guilliermondii (strain ATCC 6260 / CBS 566 / DSM 6381 / JCM 1539 / NBRC 10279 / NRRL Y-324) (Yeast).